Here is a 286-residue protein sequence, read N- to C-terminus: 2-hydroxy-6-oxo-6-phenylhexa-2,4-dienoate hydrolase (286 aa).

Substrate-binding positions include 42-43 (GG), asparagine 51, asparagine 111, threonine 180, and arginine 190. Histidine 265 serves as the catalytic Proton acceptor. Residue tryptophan 266 coordinates substrate.

It belongs to the AB hydrolase superfamily. BphD family. In terms of assembly, homodimer.

It catalyses the reaction 2,6-dioxo-6-phenylhexa-3-enoate + H2O = 2-oxopent-4-enoate + benzoate + H(+). Its pathway is xenobiotic degradation; biphenyl degradation; 2-hydroxy-2,4-pentadienoate and benzoate from biphenyl: step 4/4. Catalyzes an unusual C-C bond hydrolysis of 2-hydroxy-6-oxo-6-phenylhexa-2,4-dienoic acid (HOPDA) to produce benzoic acid and 2-hydroxy-2,4-pentadienoic acid (HPD). The chain is 2-hydroxy-6-oxo-6-phenylhexa-2,4-dienoate hydrolase from Comamonas testosteroni (Pseudomonas testosteroni).